Consider the following 65-residue polypeptide: DNA gyrase inhibitor YacG (65 aa).

Cys-8, Cys-11, Cys-27, and Cys-31 together coordinate Zn(2+). Residues 43 to 65 (SYRIPDTGKDSEKQENDPSGSEK) form a disordered region. Residues 48 to 65 (DTGKDSEKQENDPSGSEK) are compositionally biased toward basic and acidic residues.

It belongs to the DNA gyrase inhibitor YacG family. In terms of assembly, interacts with GyrB. Zn(2+) serves as cofactor.

In terms of biological role, inhibits all the catalytic activities of DNA gyrase by preventing its interaction with DNA. Acts by binding directly to the C-terminal domain of GyrB, which probably disrupts DNA binding by the gyrase. The sequence is that of DNA gyrase inhibitor YacG from Nitrosospira multiformis (strain ATCC 25196 / NCIMB 11849 / C 71).